Here is a 447-residue protein sequence, read N- to C-terminus: Protein O-GlcNAcase (447 aa).

Residues 1–277 (MLTGVIEGFY…TTGAYLADPD (277 aa)) form the GH84 domain. Positions 8, 39, and 115 each coordinate a protein. Residue D116 is the Proton donor of the active site. A protein is bound by residues Y160, 219–221 (WDN), D226, and N254.

The protein belongs to the glycosyl hydrolase 84 family.

The enzyme catalyses 3-O-(N-acetyl-beta-D-glucosaminyl)-L-seryl-[protein] + H2O = N-acetyl-D-glucosamine + L-seryl-[protein]. It carries out the reaction 3-O-(N-acetyl-beta-D-glucosaminyl)-L-threonyl-[protein] + H2O = L-threonyl-[protein] + N-acetyl-D-glucosamine. Its activity is regulated as follows. Inhibited by PUGNac (O-(2-acetamido-2-deoxy-D-glucopyranosylidene)amino-N-phenylcarbamate). Functionally, cleaves GlcNAc from O-glycosylated proteins. Can use p-nitrophenyl-beta-GlcNAc and 4-methylumbelliferone-GlcNAc as substrate (in vitro). The protein is Protein O-GlcNAcase of Oceanicola granulosus (strain ATCC BAA-861 / DSM 15982 / KCTC 12143 / HTCC2516).